We begin with the raw amino-acid sequence, 240 residues long: MTSKKVILVALSGCSSSGKTTIAKLTASLFTKATLIHEDDFYKHDNEVPVDAKYNIQNWDSPEALDFKLFGKELDVIKQTGKIATKLIHNNNVDDPFTKFHIDRQVWDELKAKYDSINDDKYEVVIVDGFMIFNNTGISKKFDLKILVRAPYEVLKKRRASRKGYQTLDSFWVDPPYYFDEFVYESYRANHAQLFVNGDVEGLLDPRKSKNIKEFINDDDTPIAKPLSWVCQEILKLCKD.

An ATP-binding site is contributed by 13–21 (GCSSSGKTT). Mg(2+)-binding residues include threonine 20 and aspartate 39. The active-site Proton acceptor is the aspartate 39. Substrate is bound by residues 39–42 (DDFY) and 59–60 (WD). Position 158 (arginine 158) interacts with ATP. Substrate contacts are provided by residues arginine 159 and 164–165 (GY). ATP contacts are provided by residues 162–164 (RKG) and 208–210 (KSK).

This sequence belongs to the uridine kinase family. NRK subfamily.

The enzyme catalyses beta-nicotinamide D-riboside + ATP = beta-nicotinamide D-ribonucleotide + ADP + H(+). It carries out the reaction beta-D-ribosylnicotinate + ATP = nicotinate beta-D-ribonucleotide + ADP + H(+). Its pathway is cofactor biosynthesis; NAD(+) biosynthesis. Its function is as follows. Catalyzes the phosphorylation of nicotinamide riboside (NR) and nicotinic acid riboside (NaR) to form nicotinamide mononucleotide (NMN) and nicotinic acid mononucleotide (NaMN). This chain is Nicotinamide riboside kinase (NRK1), found in Saccharomyces cerevisiae (strain ATCC 204508 / S288c) (Baker's yeast).